We begin with the raw amino-acid sequence, 302 residues long: Sulfate adenylyltransferase subunit 2 (302 aa).

Residues 280–302 (RQGRLIDSDQSASMEQKKRQGYF) are disordered.

This sequence belongs to the PAPS reductase family. CysD subfamily. As to quaternary structure, heterodimer composed of CysD, the smaller subunit, and CysN.

It catalyses the reaction sulfate + ATP + H(+) = adenosine 5'-phosphosulfate + diphosphate. It functions in the pathway sulfur metabolism; hydrogen sulfide biosynthesis; sulfite from sulfate: step 1/3. With CysN forms the ATP sulfurylase (ATPS) that catalyzes the adenylation of sulfate producing adenosine 5'-phosphosulfate (APS) and diphosphate, the first enzymatic step in sulfur assimilation pathway. APS synthesis involves the formation of a high-energy phosphoric-sulfuric acid anhydride bond driven by GTP hydrolysis by CysN coupled to ATP hydrolysis by CysD. This is Sulfate adenylyltransferase subunit 2 from Shewanella frigidimarina (strain NCIMB 400).